Here is a 327-residue protein sequence, read N- to C-terminus: Probable pectinesterase A (327 aa).

Positions 1–19 are cleaved as a signal peptide; it reads MHTPYLLGALAALAATAVG. Asn84 is a glycosylation site (N-linked (GlcNAc...) asparagine). Residue Gln145 participates in substrate binding. The active-site Proton donor is the Asp168. The active-site Nucleophile is the Asp189. 2 residues coordinate substrate: Arg249 and Trp251. N-linked (GlcNAc...) asparagine glycosylation is present at Asn288.

It belongs to the pectinesterase family.

It is found in the secreted. The catalysed reaction is [(1-&gt;4)-alpha-D-galacturonosyl methyl ester](n) + n H2O = [(1-&gt;4)-alpha-D-galacturonosyl](n) + n methanol + n H(+). It participates in glycan metabolism; pectin degradation; 2-dehydro-3-deoxy-D-gluconate from pectin: step 1/5. Functionally, involved in maceration and soft-rotting of plant tissue. The chain is Probable pectinesterase A (pmeA) from Aspergillus niger (strain ATCC MYA-4892 / CBS 513.88 / FGSC A1513).